A 205-amino-acid chain; its full sequence is MKKIVIVISILLTSFLSSAVSAATDSQLLKEKLAKFSFINAEFSQQVSSPEGKILDDSQGMLAISRPGKFRWEVLMPEEELIVSDGQTMWMYSPFIEQVTLLNLSDAIQGTPFILLSGANESQWADYQVNKVNDQFIVKNIAGTVQDRSFIFEFNKSSQVSKFVVIEALGQRSEFKLSHKVLSKPWVEGFFDFSIPAGVEIDDQR.

The signal sequence occupies residues 1-22; sequence MKKIVIVISILLTSFLSSAVSA.

This sequence belongs to the LolA family. As to quaternary structure, monomer.

Its subcellular location is the periplasm. Functionally, participates in the translocation of lipoproteins from the inner membrane to the outer membrane. Only forms a complex with a lipoprotein if the residue after the N-terminal Cys is not an aspartate (The Asp acts as a targeting signal to indicate that the lipoprotein should stay in the inner membrane). This is Outer-membrane lipoprotein carrier protein from Psychromonas ingrahamii (strain DSM 17664 / CCUG 51855 / 37).